Reading from the N-terminus, the 523-residue chain is 2-isopropylmalate synthase (523 aa).

The 263-residue stretch at 5–267 (VIIFDTTLRD…HTNINHHEIW (263 aa)) folds into the Pyruvate carboxyltransferase domain. The Mn(2+) site is built by D14, H202, H204, and N238. Residues 392 to 523 (RLDYFSVQSG…QNKENNKETV (132 aa)) are regulatory domain.

Belongs to the alpha-IPM synthase/homocitrate synthase family. LeuA type 1 subfamily. Homodimer. The cofactor is Mn(2+).

Its subcellular location is the cytoplasm. It catalyses the reaction 3-methyl-2-oxobutanoate + acetyl-CoA + H2O = (2S)-2-isopropylmalate + CoA + H(+). Its pathway is amino-acid biosynthesis; L-leucine biosynthesis; L-leucine from 3-methyl-2-oxobutanoate: step 1/4. In terms of biological role, catalyzes the condensation of the acetyl group of acetyl-CoA with 3-methyl-2-oxobutanoate (2-ketoisovalerate) to form 3-carboxy-3-hydroxy-4-methylpentanoate (2-isopropylmalate). This chain is 2-isopropylmalate synthase, found in Salmonella paratyphi A (strain ATCC 9150 / SARB42).